A 129-amino-acid polypeptide reads, in one-letter code: Glycine cleavage system H protein (129 aa).

The Lipoyl-binding domain occupies 24-106 (IATIGISAFA…YGEGWLVKVR (83 aa)). Position 65 is an N6-lipoyllysine (Lys65).

The protein belongs to the GcvH family. As to quaternary structure, the glycine cleavage system is composed of four proteins: P, T, L and H. (R)-lipoate serves as cofactor.

Functionally, the glycine cleavage system catalyzes the degradation of glycine. The H protein shuttles the methylamine group of glycine from the P protein to the T protein. This Cyanothece sp. (strain PCC 7425 / ATCC 29141) protein is Glycine cleavage system H protein.